The primary structure comprises 863 residues: Cilia- and flagella-associated protein 58 (863 aa).

2 coiled-coil regions span residues 107–600 (TVKE…NERD) and 631–815 (QSQY…KQVF). Positions 836–863 (GPSLLDQLPGGSGTGSGGMATGGGVGMS) are disordered. A compositionally biased stretch (gly residues) spans 845 to 863 (GGSGTGSGGMATGGGVGMS).

The protein belongs to the CFAP58 family.

The protein resides in the cell projection. Its subcellular location is the cilium. The protein localises to the flagellum. The polypeptide is Cilia- and flagella-associated protein 58 (Chlamydomonas reinhardtii (Chlamydomonas smithii)).